Reading from the N-terminus, the 242-residue chain is Protein ABHD14A (242 aa).

The helical; Signal-anchor for type II membrane protein transmembrane segment at 6–26 (AALLGLGLLLMFLLYMGLPGP) threads the bilayer. The N-linked (GlcNAc...) asparagine glycan is linked to Asn38. Active-site charge relay system residues include Ser142, Asp193, and His220.

It belongs to the AB hydrolase superfamily. ABHD14 family.

Its subcellular location is the cytoplasm. It is found in the membrane. In terms of biological role, possible role in granule neuron development. The polypeptide is Protein ABHD14A (Rattus norvegicus (Rat)).